The sequence spans 573 residues: MSQSWPAADIARMILDGFDDYREHFRQITDGARQRFEQAQWQQAQKASAARINLYEEKVGETVARLHQAFSTESLMDVSQWPLVKSAYISLIDLRFDDELSETWYNSIFCGLFSHDLISDGCMFIHTTRPSLRRARAAQTRSYKPQGELATMLEQVFADYRFSEDYADLPGDLRRLEAQLRENLPDWVCKDPELTLELFSSVLYRNKGAYLVGRIFTHEEQWPLVIPLLHREGRGIQIDALITDEADVSIIFSFTRSYFMVDVPVPAEFIGFLKRILPGKHIAELYTSIGFYKHGKSEFYRALINHLASTDDRFIMAPGVRGMVMSVFTLPGFNTVFKIIKDRFSPSKNVDRATVIEKYRLVKSVDRVGRMADTQEFADFRFPLSKFDPACLEELLEVAPSTVAVEGQTVLIRHCWTERRMTPLNLYLEHANEAQVREALEDYGLAIKQLAAANIFPGDMLLKNFGVTRHGRVVFYDYDEICFLTEANFRHIPAPRTPEDEMASEPWYSIGPHDVFPEEFPPFLFADAGQRKLFDQLHGELYNADYWKGLQEAIRAGKVIDVFPYRRQGLEDE.

ATP-binding positions include 317-323 (APGVRGM) and K338. D373 is an active-site residue.

Belongs to the AceK family.

It localises to the cytoplasm. The enzyme catalyses L-seryl-[isocitrate dehydrogenase] + ATP = O-phospho-L-seryl-[isocitrate dehydrogenase] + ADP + H(+). Bifunctional enzyme which can phosphorylate or dephosphorylate isocitrate dehydrogenase (IDH) on a specific serine residue. This is a regulatory mechanism which enables bacteria to bypass the Krebs cycle via the glyoxylate shunt in response to the source of carbon. When bacteria are grown on glucose, IDH is fully active and unphosphorylated, but when grown on acetate or ethanol, the activity of IDH declines drastically concomitant with its phosphorylation. The chain is Isocitrate dehydrogenase kinase/phosphatase from Pseudomonas fluorescens (strain ATCC BAA-477 / NRRL B-23932 / Pf-5).